The sequence spans 412 residues: Multidrug resistance protein MdtG (412 aa).

The next 11 membrane-spanning stretches (helical) occupy residues 19–39 (LGCF…PLYV), 56–76 (LVFS…GGLA), 90–110 (LGMS…QFLL), 113–133 (ALLG…ATQI), 144–164 (TLST…GFLA), 171–191 (TVFF…LFLI), 222–242 (LFVT…ILTL), 254–274 (IAFI…MSAP), 288–308 (ILIV…FVQT), 317–337 (FLLG…LVYN), and 376–396 (AVFL…TLSL).

It belongs to the major facilitator superfamily. DHA1 family. MdtG (TC 2.A.1.2.20) subfamily.

Its subcellular location is the cell inner membrane. In Klebsiella pneumoniae (strain 342), this protein is Multidrug resistance protein MdtG.